A 393-amino-acid chain; its full sequence is Sialyltransferase-like protein 1 (393 aa).

Topologically, residues 1–8 (MKRPLRRP) are cytoplasmic. A helical; Signal-anchor for type II membrane protein membrane pass occupies residues 9–27 (FAVLLFVVLCAAASFPSVL). Residues 28 to 393 (RRSVGPAPVL…IAVPPVVFYH (366 aa)) lie on the Lumenal side of the membrane. 3 N-linked (GlcNAc...) asparagine glycosylation sites follow: Asn-49, Asn-212, and Asn-258.

Belongs to the glycosyltransferase 29 family.

Its subcellular location is the golgi apparatus membrane. Possesses sialyltransferase-like activity in vitro. Transfers sialic acid to the oligosaccharide Gal-beta-1,3-GalNAc and to glycoproteins such as asialofetuin, alpha-1-acid glycoprotein (NeuAc-alpha-2,3-Gal-beta-1,3-GalNAc-) and andasialo-alpha-1-acid glycoprotein. The transferred sialic acid is linked to galactose of Gal-beta-1,3-GalNAc through alpha-2,6-linkage. This is Sialyltransferase-like protein 1 from Oryza sativa subsp. indica (Rice).